Here is an 877-residue protein sequence, read N- to C-terminus: Alanine--tRNA ligase (877 aa).

The Zn(2+) site is built by histidine 562, histidine 566, cysteine 664, and histidine 668.

It belongs to the class-II aminoacyl-tRNA synthetase family. Zn(2+) is required as a cofactor.

The protein localises to the cytoplasm. It carries out the reaction tRNA(Ala) + L-alanine + ATP = L-alanyl-tRNA(Ala) + AMP + diphosphate. Catalyzes the attachment of alanine to tRNA(Ala) in a two-step reaction: alanine is first activated by ATP to form Ala-AMP and then transferred to the acceptor end of tRNA(Ala). Also edits incorrectly charged Ser-tRNA(Ala) and Gly-tRNA(Ala) via its editing domain. The chain is Alanine--tRNA ligase from Synechocystis sp. (strain ATCC 27184 / PCC 6803 / Kazusa).